The chain runs to 220 residues: Inner membrane-spanning protein YciB (220 aa).

6 consecutive transmembrane segments (helical) span residues 20–40 (EVPPLLKLALELGPLLVFFFA), 57–77 (IGAPIFLATALFMAATVIALA), 86–106 (LPIMPLVSGIVVLVFGALTLW), 123–143 (LFGGILLGGLFFGKSLLGYVF), 156–176 (KLTLRWALFFIFLAIVNEIVW), and 187–207 (FKVWGIMPITIVFTLLQMPLI).

It belongs to the YciB family.

Its subcellular location is the cell inner membrane. In terms of biological role, plays a role in cell envelope biogenesis, maintenance of cell envelope integrity and membrane homeostasis. This chain is Inner membrane-spanning protein YciB, found in Brucella melitensis biotype 2 (strain ATCC 23457).